Here is a 228-residue protein sequence, read N- to C-terminus: 2,3-bisphosphoglycerate-dependent phosphoglycerate mutase (228 aa).

Substrate is bound by residues 8–15 (RHGQSEWN), 21–22 (TG), R60, 87–90 (ERHY), K98, 114–115 (RR), and 183–184 (GN). The active-site Tele-phosphohistidine intermediate is the H9. E87 (proton donor/acceptor) is an active-site residue.

It belongs to the phosphoglycerate mutase family. BPG-dependent PGAM subfamily.

The catalysed reaction is (2R)-2-phosphoglycerate = (2R)-3-phosphoglycerate. It functions in the pathway carbohydrate degradation; glycolysis; pyruvate from D-glyceraldehyde 3-phosphate: step 3/5. Catalyzes the interconversion of 2-phosphoglycerate and 3-phosphoglycerate. The polypeptide is 2,3-bisphosphoglycerate-dependent phosphoglycerate mutase (Staphylococcus aureus (strain MRSA252)).